Reading from the N-terminus, the 289-residue chain is Oxaloacetate decarboxylase (289 aa).

A substrate-binding site is contributed by Ser-50. Asp-88 serves as a coordination point for Mg(2+). Residues Arg-159 and His-235 each coordinate substrate.

This sequence belongs to the isocitrate lyase/PEP mutase superfamily. Oxaloacetate decarboxylase family. In terms of assembly, homotetramer; dimer of dimers. Mg(2+) serves as cofactor.

The enzyme catalyses oxaloacetate + H(+) = pyruvate + CO2. Catalyzes the decarboxylation of oxaloacetate into pyruvate. Seems to play a role in maintaining cellular concentrations of bicarbonate and pyruvate. This Pseudomonas fluorescens (strain ATCC BAA-477 / NRRL B-23932 / Pf-5) protein is Oxaloacetate decarboxylase.